Here is a 458-residue protein sequence, read N- to C-terminus: UDP-N-acetylmuramoylalanine--D-glutamate ligase (458 aa).

Residue 124 to 130 (GSDGKTT) coordinates ATP.

Belongs to the MurCDEF family.

Its subcellular location is the cytoplasm. It carries out the reaction UDP-N-acetyl-alpha-D-muramoyl-L-alanine + D-glutamate + ATP = UDP-N-acetyl-alpha-D-muramoyl-L-alanyl-D-glutamate + ADP + phosphate + H(+). The protein operates within cell wall biogenesis; peptidoglycan biosynthesis. Functionally, cell wall formation. Catalyzes the addition of glutamate to the nucleotide precursor UDP-N-acetylmuramoyl-L-alanine (UMA). The protein is UDP-N-acetylmuramoylalanine--D-glutamate ligase of Clostridium beijerinckii (strain ATCC 51743 / NCIMB 8052) (Clostridium acetobutylicum).